The chain runs to 192 residues: RNA pyrophosphohydrolase (192 aa).

Positions 6–149 constitute a Nudix hydrolase domain; it reads GYRPNVGIVI…KKDVYRKVMK (144 aa). A Nudix box motif is present at residues 38–59; that stretch reads GGINDNETAEQAMYRELYEEAG.

The protein belongs to the Nudix hydrolase family. RppH subfamily. It depends on a divalent metal cation as a cofactor.

Its function is as follows. Accelerates the degradation of transcripts by removing pyrophosphate from the 5'-end of triphosphorylated RNA, leading to a more labile monophosphorylated state that can stimulate subsequent ribonuclease cleavage. This chain is RNA pyrophosphohydrolase, found in Histophilus somni (strain 129Pt) (Haemophilus somnus).